The following is a 283-amino-acid chain: Nucleoid occlusion protein (283 aa).

Positions 148–167 (EALAQRLGKGQSTIANKLRL) form a DNA-binding region, H-T-H motif.

Belongs to the ParB family.

The protein resides in the cytoplasm. It localises to the nucleoid. In terms of biological role, effects nucleoid occlusion by binding relatively nonspecifically to DNA and preventing the assembly of the division machinery in the vicinity of the nucleoid, especially under conditions that disturb the cell cycle. It helps to coordinate cell division and chromosome segregation by preventing the formation of the Z ring through the nucleoid, which would cause chromosome breakage. This chain is Nucleoid occlusion protein (noc), found in Bacillus subtilis (strain 168).